Here is a 216-residue protein sequence, read N- to C-terminus: Protein-L-isoaspartate O-methyltransferase (216 aa).

The active site involves S61.

The protein belongs to the methyltransferase superfamily. L-isoaspartyl/D-aspartyl protein methyltransferase family.

The protein localises to the cytoplasm. The enzyme catalyses [protein]-L-isoaspartate + S-adenosyl-L-methionine = [protein]-L-isoaspartate alpha-methyl ester + S-adenosyl-L-homocysteine. Its function is as follows. Catalyzes the methyl esterification of L-isoaspartyl residues in peptides and proteins that result from spontaneous decomposition of normal L-aspartyl and L-asparaginyl residues. It plays a role in the repair and/or degradation of damaged proteins. This Geobacter metallireducens (strain ATCC 53774 / DSM 7210 / GS-15) protein is Protein-L-isoaspartate O-methyltransferase.